The chain runs to 488 residues: Bifunctional protein HldE (488 aa).

Residues 1 to 330 (MIDFDGLSNA…RNILPPASLA (330 aa)) form a ribokinase region. 205–208 (NSKE) is a binding site for ATP. Asp-275 is a catalytic residue. The tract at residues 358 to 488 (FTNGCFDILH…TSLVKRAGGA (131 aa)) is cytidylyltransferase.

In the N-terminal section; belongs to the carbohydrate kinase PfkB family. It in the C-terminal section; belongs to the cytidylyltransferase family. As to quaternary structure, homodimer.

It carries out the reaction D-glycero-beta-D-manno-heptose 7-phosphate + ATP = D-glycero-beta-D-manno-heptose 1,7-bisphosphate + ADP + H(+). The enzyme catalyses D-glycero-beta-D-manno-heptose 1-phosphate + ATP + H(+) = ADP-D-glycero-beta-D-manno-heptose + diphosphate. It participates in nucleotide-sugar biosynthesis; ADP-L-glycero-beta-D-manno-heptose biosynthesis; ADP-L-glycero-beta-D-manno-heptose from D-glycero-beta-D-manno-heptose 7-phosphate: step 1/4. It functions in the pathway nucleotide-sugar biosynthesis; ADP-L-glycero-beta-D-manno-heptose biosynthesis; ADP-L-glycero-beta-D-manno-heptose from D-glycero-beta-D-manno-heptose 7-phosphate: step 3/4. In terms of biological role, catalyzes the phosphorylation of D-glycero-D-manno-heptose 7-phosphate at the C-1 position to selectively form D-glycero-beta-D-manno-heptose-1,7-bisphosphate. Functionally, catalyzes the ADP transfer from ATP to D-glycero-beta-D-manno-heptose 1-phosphate, yielding ADP-D-glycero-beta-D-manno-heptose. The polypeptide is Bifunctional protein HldE (Nitrobacter winogradskyi (strain ATCC 25391 / DSM 10237 / CIP 104748 / NCIMB 11846 / Nb-255)).